The sequence spans 595 residues: MSIPQSKSSSNGFPLKRGETEEVLHKTNTSNTVFNGEAGSLKRLSLDRLVYFTTCKIGHHVEVHLRNGSVYTGIFHAANVEKDFGIILKMACLIKDGTLRGHKSRSEFVRKPPSKTFIIPADELVQVIAKDLSVSSNNMSNAVQGEKPSELLTDSSISQSYHVDRERQLQRWVPDETIPHGADLENVFDNPWNRKWNQFEVNKSLFGVKSTFDEDLYTTRLERGPQTKQLEEHAQKIAREIEAETTRDIHVAEERGLQLNENFDFDEEARYSSVRPVTGFGDSGFDLEDNALLDTCNDLTFGGSSTSDGQKPASSGKGCEELRVSGDSQSSRKNKNVDQSCSTSKQQSKDFPAAGSNISESQLDEQRRKNNEEVSHNNRSAEESTSGHGDIKEGAKSGGGASSVSKAVTEREREASQVSSKTKSESSFGQSASRSSESRPGPSTSSRPGLSPSSSIGSMASSEKSTLNPNAKEFKLNPKAKSFKPLQSAAAPPQSPIADASFYYPGPSHVPVQQMPGMPPVNYGLPPYPGNQPQMMYHPQAYYHPNGQPQYPQQQMIPGQQQQQMIPGQQHPRPVYYMHPPPYPQDMPYHNKGRE.

The region spanning R48–P113 is the Sm domain. 2 stretches are compositionally biased toward polar residues: residues G302–A313 and G326–Q346. 2 disordered regions span residues G302 to P505 and M536 to E595. Positions D364 to E382 are enriched in basic and acidic residues. The span at S416–S465 shows a compositional bias: low complexity. Positions T466 to F474 match the PAM2-like 1; degenerate motif. The PAM2-like 2 signature appears at K475 to P485. Composition is skewed to low complexity over residues S488–S501 and Q548–Q570.

As to expression, expressed in cauline leaves, stems, rosette leaves, immature siliques and primary inflorescences.

This chain is Polyadenylate-binding protein-interacting protein 4 (CID4), found in Arabidopsis thaliana (Mouse-ear cress).